We begin with the raw amino-acid sequence, 491 residues long: Probable folate-biopterin transporter 4 (491 aa).

A run of 6 helical transmembrane segments spans residues 14–34 (VAFLWLVCLIYFTQGFRSFVW), 52–72 (SQFVFSVAFFPWSIKPLYGII), 84–104 (TPYLVISTVLSLVPWLVLGLD), 112–132 (LYLMIFLTVQNLGSAMADVVI), 154–174 (VSWFAMAVGGVCGSLLGGYAL), and 179–199 (IETIFLLFTVLPALQLLSCAL). A disordered region spans residues 222-262 (KSLTSNDNYPDTSKSNTRRRKGQKKGKKGDSNGKSETQKKQ). Over residues 224–236 (LTSNDNYPDTSKS) the composition is skewed to polar residues. Residues 237–248 (NTRRRKGQKKGK) are compositionally biased toward basic residues. The segment covering 249–260 (KGDSNGKSETQK) has biased composition (basic and acidic residues). A run of 6 helical transmembrane segments spans residues 294–314 (MAWFFIAHITVPNLSTVMFYY), 323–343 (AAFLGTARVVGWLGLMFGTFI), 356–376 (SLLFAHIGLSVTILLDMVLVS), 389–411 (MVLFGSALGDAINQLKFMPFLIL), 437–457 (TVGSFMGAGLASLLGISSGSF), and 461–481 (FMGLAIQVFCTYIPVLFLFLI).

The protein belongs to the major facilitator superfamily. Folate-biopterin transporter (TC 2.A.71) family.

It localises to the membrane. Could mediate folate transport. The chain is Probable folate-biopterin transporter 4 from Arabidopsis thaliana (Mouse-ear cress).